The chain runs to 199 residues: FMN-dependent NADH:quinone oxidoreductase (199 aa).

FMN contacts are provided by residues serine 9, 15 to 17, and 95 to 98; these read SNS and MYNF.

It belongs to the azoreductase type 1 family. As to quaternary structure, homodimer. The cofactor is FMN.

The enzyme catalyses 2 a quinone + NADH + H(+) = 2 a 1,4-benzosemiquinone + NAD(+). It catalyses the reaction N,N-dimethyl-1,4-phenylenediamine + anthranilate + 2 NAD(+) = 2-(4-dimethylaminophenyl)diazenylbenzoate + 2 NADH + 2 H(+). Functionally, quinone reductase that provides resistance to thiol-specific stress caused by electrophilic quinones. Its function is as follows. Also exhibits azoreductase activity. Catalyzes the reductive cleavage of the azo bond in aromatic azo compounds to the corresponding amines. The polypeptide is FMN-dependent NADH:quinone oxidoreductase (Aromatoleum aromaticum (strain DSM 19018 / LMG 30748 / EbN1) (Azoarcus sp. (strain EbN1))).